A 765-amino-acid chain; its full sequence is LPS-assembly protein LptD (765 aa).

The first 18 residues, 1-18 (MQIRYLLALSLLPKLVLA), serve as a signal peptide directing secretion.

This sequence belongs to the LptD family. Component of the lipopolysaccharide transport and assembly complex. Interacts with LptE and LptA.

The protein localises to the cell outer membrane. Its function is as follows. Together with LptE, is involved in the assembly of lipopolysaccharide (LPS) at the surface of the outer membrane. This chain is LPS-assembly protein LptD, found in Shewanella oneidensis (strain ATCC 700550 / JCM 31522 / CIP 106686 / LMG 19005 / NCIMB 14063 / MR-1).